A 988-amino-acid chain; its full sequence is Vacuolar sorting protein 18 (988 aa).

The stretch at 589–749 is one CHCR repeat; sequence NKNLNPRRLI…VVKQEKGAKR (161 aa). Positions 785 to 819 form a coiled coil; the sequence is KEAICSSLEDYNKQIEQLKEEMNDATRGADNIRND. The RING-type; degenerate zinc finger occupies 836–886; that stretch reads CGVCKRKILMMSGDFRMAQGYSSAGPLAPFYVFPCGHSFHAQCLITHVTSC.

Belongs to the VPS18 family. In terms of assembly, core component of at least two putative endosomal tethering complexes, the homotypic fusion and vacuole protein sorting (HOPS) complex and the class C core vacuole/endosome tethering (CORVET) complex. Their common core is composed of the class C Vps proteins VPS11, VCL1, VPS18 and VPS33, which in HOPS further associates with VPS39 and VPS41 and in CORVET with VPS3.

It localises to the endosome membrane. Its subcellular location is the vacuole membrane. It is found in the cytoplasm. In terms of biological role, essential protein required during embryogenesis. Believed to act as a core component of the putative HOPS endosomal tethering complex and of the class C core vacuole/endosome tethering (CORVET) complex. CORVET is required for vacuolar transport of SYP22. HOPS is required for the central vacuole formation. Involved in root development. Plays a role in vesicle-mediated protein trafficking to lysosomal compartments including the endocytic membrane transport pathways. The polypeptide is Vacuolar sorting protein 18 (Arabidopsis thaliana (Mouse-ear cress)).